We begin with the raw amino-acid sequence, 678 residues long: Protein MALE DISCOVERER 2 (678 aa).

Residues Met-1–Ser-25 form the signal peptide. The Extracellular portion of the chain corresponds to Leu-26–Tyr-323. Asn-52 carries an N-linked (GlcNAc...) asparagine glycan. 4 LRR repeats span residues Lys-71–Ser-94, Asp-95–Phe-117, Asn-119–Gly-141, and Ser-143–Arg-164. The segment at Leu-247–Ser-314 is disordered. Residues Lys-296–Asn-311 are compositionally biased toward polar residues. A helical transmembrane segment spans residues Val-324 to Cys-344. Topologically, residues Arg-345–Thr-678 are cytoplasmic. Residues Lys-346–Ile-651 enclose the Protein kinase domain.

This sequence belongs to the protein kinase superfamily. Ser/Thr protein kinase family. In terms of tissue distribution, expressed in pollen tubes and seedlings.

The protein resides in the endomembrane system. The enzyme catalyses L-seryl-[protein] + ATP = O-phospho-L-seryl-[protein] + ADP + H(+). It carries out the reaction L-threonyl-[protein] + ATP = O-phospho-L-threonyl-[protein] + ADP + H(+). Its function is as follows. Involved in the pollen tube perception of the female signal by binding an unidentified female attractant. May be involved in the regulation of root hairs development. This chain is Protein MALE DISCOVERER 2 (MDIS2), found in Arabidopsis thaliana (Mouse-ear cress).